Here is a 219-residue protein sequence, read N- to C-terminus: Deoxyribose-phosphate aldolase (219 aa).

The active-site Proton donor/acceptor is the aspartate 89. Lysine 151 functions as the Schiff-base intermediate with acetaldehyde in the catalytic mechanism. The active-site Proton donor/acceptor is the lysine 180.

The protein belongs to the DeoC/FbaB aldolase family. DeoC type 1 subfamily.

It is found in the cytoplasm. It catalyses the reaction 2-deoxy-D-ribose 5-phosphate = D-glyceraldehyde 3-phosphate + acetaldehyde. Its pathway is carbohydrate degradation; 2-deoxy-D-ribose 1-phosphate degradation; D-glyceraldehyde 3-phosphate and acetaldehyde from 2-deoxy-alpha-D-ribose 1-phosphate: step 2/2. Its function is as follows. Catalyzes a reversible aldol reaction between acetaldehyde and D-glyceraldehyde 3-phosphate to generate 2-deoxy-D-ribose 5-phosphate. This Clostridioides difficile (strain 630) (Peptoclostridium difficile) protein is Deoxyribose-phosphate aldolase.